The sequence spans 60 residues: Metallothionein A (60 aa).

The beta stretch occupies residues 1 to 28 (MDPCECSKSGNCNCGGSCTCTNCSCKSC). Residues Cys-4, Cys-6, Cys-12, Cys-14, Cys-18, Cys-20, Cys-23, Cys-25, Cys-28, Cys-32, Cys-33, Cys-35, Cys-36, Cys-40, Cys-43, Cys-47, Cys-49, Cys-54, Cys-58, and Cys-59 each coordinate a divalent metal cation. The alpha stretch occupies residues 29 to 60 (KKSCCPCCPSGCTKCASGCVCKGKTCDTSCCQ).

It belongs to the metallothionein superfamily. Type 1 family.

Functionally, metallothioneins have a high content of cysteine residues that bind various heavy metals. This chain is Metallothionein A (mta), found in Parachaenichthys charcoti (Charcot's dragonfish).